The sequence spans 547 residues: Glucose-6-phosphate isomerase (547 aa).

Residue Glu-350 is the Proton donor of the active site. Active-site residues include His-381 and Lys-510.

This sequence belongs to the GPI family.

It localises to the cytoplasm. It carries out the reaction alpha-D-glucose 6-phosphate = beta-D-fructose 6-phosphate. The protein operates within carbohydrate biosynthesis; gluconeogenesis. Its pathway is carbohydrate degradation; glycolysis; D-glyceraldehyde 3-phosphate and glycerone phosphate from D-glucose: step 2/4. In terms of biological role, catalyzes the reversible isomerization of glucose-6-phosphate to fructose-6-phosphate. The protein is Glucose-6-phosphate isomerase of Mesorhizobium japonicum (strain LMG 29417 / CECT 9101 / MAFF 303099) (Mesorhizobium loti (strain MAFF 303099)).